A 208-amino-acid polypeptide reads, in one-letter code: Outer-membrane lipoprotein carrier protein (208 aa).

Residues 1 to 23 (MKKTVKNLTALLTLALAAPWALA) form the signal peptide.

This sequence belongs to the LolA family. As to quaternary structure, monomer.

It is found in the periplasm. Its function is as follows. Participates in the translocation of lipoproteins from the inner membrane to the outer membrane. Only forms a complex with a lipoprotein if the residue after the N-terminal Cys is not an aspartate (The Asp acts as a targeting signal to indicate that the lipoprotein should stay in the inner membrane). In Actinobacillus succinogenes (strain ATCC 55618 / DSM 22257 / CCUG 43843 / 130Z), this protein is Outer-membrane lipoprotein carrier protein.